We begin with the raw amino-acid sequence, 141 residues long: uncharacterized protein (141 aa).

This is an uncharacterized protein from Escherichia coli (strain K12).